Consider the following 178-residue polypeptide: Large ribosomal subunit protein uL6 (178 aa).

The protein belongs to the universal ribosomal protein uL6 family. Part of the 50S ribosomal subunit. Interacts weakly with protein L13.

In terms of biological role, this protein binds to the 23S rRNA, and is important in its secondary structure. It is located near the subunit interface in the base of the L7/L12 stalk, and near the tRNA binding site of the peptidyltransferase center. In Haloarcula marismortui (strain ATCC 43049 / DSM 3752 / JCM 8966 / VKM B-1809) (Halobacterium marismortui), this protein is Large ribosomal subunit protein uL6.